Reading from the N-terminus, the 84-residue chain is Large ribosomal subunit protein bL27 (84 aa).

The tract at residues 1-20 is disordered; sequence MAHKKGGGSTKNGRDSNPKY.

It belongs to the bacterial ribosomal protein bL27 family.

This chain is Large ribosomal subunit protein bL27 (rpmA), found in Prosthecochloris vibrioformis (Chlorobium vibrioforme).